The sequence spans 157 residues: Ribosome-binding factor A (157 aa).

The segment at 124-157 (SAGAQFAGDADPYRKPESDDESDTAAKTDGDAAE) is disordered. A compositionally biased stretch (basic and acidic residues) spans 147–157 (TAAKTDGDAAE).

It belongs to the RbfA family. In terms of assembly, monomer. Binds 30S ribosomal subunits, but not 50S ribosomal subunits or 70S ribosomes.

The protein localises to the cytoplasm. One of several proteins that assist in the late maturation steps of the functional core of the 30S ribosomal subunit. Associates with free 30S ribosomal subunits (but not with 30S subunits that are part of 70S ribosomes or polysomes). Required for efficient processing of 16S rRNA. May interact with the 5'-terminal helix region of 16S rRNA. The polypeptide is Ribosome-binding factor A (Streptomyces avermitilis (strain ATCC 31267 / DSM 46492 / JCM 5070 / NBRC 14893 / NCIMB 12804 / NRRL 8165 / MA-4680)).